The sequence spans 331 residues: Probable allantoicase (331 aa).

This sequence belongs to the allantoicase family.

It catalyses the reaction allantoate + H2O = (S)-ureidoglycolate + urea. The protein operates within nitrogen metabolism; (S)-allantoin degradation; (S)-ureidoglycolate from allantoate (aminidohydrolase route): step 1/1. The polypeptide is Probable allantoicase (Stutzerimonas stutzeri (strain A1501) (Pseudomonas stutzeri)).